A 198-amino-acid chain; its full sequence is MEQATQQIAISDAAQAHFRKLLDTQEEGTNIRIFVVNPGTPNAECGVSYCPPNAVEESDIEMKYNTFSAFIDEVSLPFLEEAEIDYVTEELGAQLTLKAPNAKMRKVADDAPLIERVEYVIQTQINPQLANHGGRITLIEITEDGYAVLQFGGGCNGCSMVDVTLKDGVEKQLVSLFPNELKGAKDITEHQRGEHSYY.

Cys155 and Cys158 together coordinate [4Fe-4S] cluster.

This sequence belongs to the NfuA family. As to quaternary structure, homodimer. [4Fe-4S] cluster is required as a cofactor.

Functionally, involved in iron-sulfur cluster biogenesis. Binds a 4Fe-4S cluster, can transfer this cluster to apoproteins, and thereby intervenes in the maturation of Fe/S proteins. Could also act as a scaffold/chaperone for damaged Fe/S proteins. This chain is Fe/S biogenesis protein NfuA, found in Haemophilus influenzae (strain 86-028NP).